Reading from the N-terminus, the 206-residue chain is tRNA(Phe) 7-((3-amino-3-carboxypropyl)-4-demethylwyosine(37)-N(4))-methyltransferase 2 (206 aa).

It belongs to the TYW3 family.

The catalysed reaction is 4-demethyl-7-[(3S)-3-amino-3-carboxypropyl]wyosine(37) in tRNA(Phe) + S-adenosyl-L-methionine = 7-[(3S)-3-amino-3-carboxypropyl]wyosine(37) in tRNA(Phe) + S-adenosyl-L-homocysteine + H(+). In terms of biological role, S-adenosyl-L-methionine-dependent methyltransferase that acts as a component of the wyosine derivatives biosynthesis pathway. Probably methylates N-4 position of wybutosine-86 to produce wybutosine-72. The protein is tRNA(Phe) 7-((3-amino-3-carboxypropyl)-4-demethylwyosine(37)-N(4))-methyltransferase 2 of Pyrococcus horikoshii (strain ATCC 700860 / DSM 12428 / JCM 9974 / NBRC 100139 / OT-3).